We begin with the raw amino-acid sequence, 316 residues long: tRNA dimethylallyltransferase (316 aa).

19–26 is a binding site for ATP; sequence GPTASGKT. Substrate is bound at residue 21–26; the sequence is TASGKT. Interaction with substrate tRNA regions lie at residues 44–47, 168–172, and 249–254; these read DSAL, QRITR, and RCVGYR.

This sequence belongs to the IPP transferase family. Monomer. Mg(2+) is required as a cofactor.

It carries out the reaction adenosine(37) in tRNA + dimethylallyl diphosphate = N(6)-dimethylallyladenosine(37) in tRNA + diphosphate. Functionally, catalyzes the transfer of a dimethylallyl group onto the adenine at position 37 in tRNAs that read codons beginning with uridine, leading to the formation of N6-(dimethylallyl)adenosine (i(6)A). The chain is tRNA dimethylallyltransferase from Colwellia psychrerythraea (strain 34H / ATCC BAA-681) (Vibrio psychroerythus).